The chain runs to 524 residues: FAD-dependent monooxygenase opdD (524 aa).

FAD-binding residues include glutamate 48 and arginine 145.

It belongs to the paxM FAD-dependent monooxygenase family.

The protein operates within secondary metabolite biosynthesis. In terms of biological role, FAD-dependent monooxygenase; part of the gene cluster that mediates the biosynthesis of oxopyrrolidines, polyketide-amino acid hybrid compounds with feature structures of tetramic acid. Does not seem to play a role in oxopyrrolidines A and B biosynthesis. May be involved in further modifications of these oxopyrrolidines. The chain is FAD-dependent monooxygenase opdD from Penicillium oxalicum (strain 114-2 / CGMCC 5302) (Penicillium decumbens).